Reading from the N-terminus, the 233-residue chain is Urease accessory protein UreF (233 aa).

The protein belongs to the UreF family. As to quaternary structure, ureD, UreF and UreG form a complex that acts as a GTP-hydrolysis-dependent molecular chaperone, activating the urease apoprotein by helping to assemble the nickel containing metallocenter of UreC. The UreE protein probably delivers the nickel.

The protein resides in the cytoplasm. Its function is as follows. Required for maturation of urease via the functional incorporation of the urease nickel metallocenter. The protein is Urease accessory protein UreF of Polaromonas sp. (strain JS666 / ATCC BAA-500).